The following is a 127-amino-acid chain: Protein ApaG (127 aa).

In terms of domain architecture, ApaG spans 3 to 127 (DADVYAISVE…FVLAIPRTLH (125 aa)).

In Stenotrophomonas maltophilia (strain K279a), this protein is Protein ApaG.